Here is a 734-residue protein sequence, read N- to C-terminus: Ribosomal RNA large subunit methyltransferase K/L (734 aa).

Positions 49 to 167 (HAYRICMWSR…KTEHTYCLDL (119 aa)) constitute a THUMP domain.

Belongs to the methyltransferase superfamily. RlmKL family.

The protein resides in the cytoplasm. The enzyme catalyses guanosine(2445) in 23S rRNA + S-adenosyl-L-methionine = N(2)-methylguanosine(2445) in 23S rRNA + S-adenosyl-L-homocysteine + H(+). The catalysed reaction is guanosine(2069) in 23S rRNA + S-adenosyl-L-methionine = N(2)-methylguanosine(2069) in 23S rRNA + S-adenosyl-L-homocysteine + H(+). Its function is as follows. Specifically methylates the guanine in position 2445 (m2G2445) and the guanine in position 2069 (m7G2069) of 23S rRNA. The chain is Ribosomal RNA large subunit methyltransferase K/L from Acinetobacter baumannii (strain ACICU).